The following is a 464-amino-acid chain: Bifunctional protein GlmU (464 aa).

The segment at 1–231 is pyrophosphorylase; that stretch reads MDVVIMAAGK…ATQVAGVNSP (231 aa). UDP-N-acetyl-alpha-D-glucosamine contacts are provided by residues K20, Q78, 83 to 84, 105 to 107, G142, E156, and N229; these read GT and SGD. A Mg(2+)-binding site is contributed by D107. N229 contributes to the Mg(2+) binding site. Residues 232–252 form a linker region; sequence VQLAALERAFQSKVALQLMEQ. The tract at residues 253–464 is N-acetyltransferase; sequence GVRLADPARL…SIANWKRPSK (212 aa). UDP-N-acetyl-alpha-D-glucosamine is bound by residues R343 and K361. Residue H373 is the Proton acceptor of the active site. UDP-N-acetyl-alpha-D-glucosamine-binding residues include Y376 and N387. Acetyl-CoA-binding positions include A390, 396 to 397, S415, G433, and R450; that span reads NY.

The protein in the N-terminal section; belongs to the N-acetylglucosamine-1-phosphate uridyltransferase family. It in the C-terminal section; belongs to the transferase hexapeptide repeat family. In terms of assembly, homotrimer. Mg(2+) serves as cofactor.

Its subcellular location is the cytoplasm. The enzyme catalyses alpha-D-glucosamine 1-phosphate + acetyl-CoA = N-acetyl-alpha-D-glucosamine 1-phosphate + CoA + H(+). The catalysed reaction is N-acetyl-alpha-D-glucosamine 1-phosphate + UTP + H(+) = UDP-N-acetyl-alpha-D-glucosamine + diphosphate. Its pathway is nucleotide-sugar biosynthesis; UDP-N-acetyl-alpha-D-glucosamine biosynthesis; N-acetyl-alpha-D-glucosamine 1-phosphate from alpha-D-glucosamine 6-phosphate (route II): step 2/2. It participates in nucleotide-sugar biosynthesis; UDP-N-acetyl-alpha-D-glucosamine biosynthesis; UDP-N-acetyl-alpha-D-glucosamine from N-acetyl-alpha-D-glucosamine 1-phosphate: step 1/1. The protein operates within bacterial outer membrane biogenesis; LPS lipid A biosynthesis. Functionally, catalyzes the last two sequential reactions in the de novo biosynthetic pathway for UDP-N-acetylglucosamine (UDP-GlcNAc). The C-terminal domain catalyzes the transfer of acetyl group from acetyl coenzyme A to glucosamine-1-phosphate (GlcN-1-P) to produce N-acetylglucosamine-1-phosphate (GlcNAc-1-P), which is converted into UDP-GlcNAc by the transfer of uridine 5-monophosphate (from uridine 5-triphosphate), a reaction catalyzed by the N-terminal domain. This is Bifunctional protein GlmU from Albidiferax ferrireducens (strain ATCC BAA-621 / DSM 15236 / T118) (Rhodoferax ferrireducens).